The following is a 320-amino-acid chain: o-succinylbenzoate synthase (320 aa).

Lys133 acts as the Proton donor in catalysis. Mg(2+) is bound by residues Asp161, Glu190, and Asp213. The active-site Proton acceptor is Lys235.

The protein belongs to the mandelate racemase/muconate lactonizing enzyme family. MenC type 1 subfamily. It depends on a divalent metal cation as a cofactor.

The catalysed reaction is (1R,6R)-6-hydroxy-2-succinyl-cyclohexa-2,4-diene-1-carboxylate = 2-succinylbenzoate + H2O. The protein operates within quinol/quinone metabolism; 1,4-dihydroxy-2-naphthoate biosynthesis; 1,4-dihydroxy-2-naphthoate from chorismate: step 4/7. Its pathway is quinol/quinone metabolism; menaquinone biosynthesis. Converts 2-succinyl-6-hydroxy-2,4-cyclohexadiene-1-carboxylate (SHCHC) to 2-succinylbenzoate (OSB). The sequence is that of o-succinylbenzoate synthase from Shigella boydii serotype 18 (strain CDC 3083-94 / BS512).